The primary structure comprises 338 residues: 3-keto-steroid reductase erg27 (338 aa).

NADP(+) is bound by residues L16, T44, K50, and D75. Catalysis depends on proton donor residues S180 and Y203. 3 residues coordinate NADP(+): Y203, K207, and T236. Catalysis depends on K207, which acts as the Lowers pKa of active site Tyr.

The protein belongs to the short-chain dehydrogenases/reductases (SDR) family. ERG27 subfamily. In terms of assembly, heterotetramer of erg25, erg26, erg27 and erg28. Erg28 acts as a scaffold to tether erg27 and other 4,4-demethylation-related enzymes, forming a demethylation enzyme complex, in the endoplasmic reticulum.

The catalysed reaction is 3-dehydro-4alpha-methylzymosterol + NADPH + H(+) = 4alpha-methylzymosterol + NADP(+). Its pathway is steroid biosynthesis; zymosterol biosynthesis; zymosterol from lanosterol: step 5/6. It functions in the pathway steroid metabolism; ergosterol biosynthesis. Functionally, 3-keto-steroid reductase; part of the third module of ergosterol biosynthesis pathway that includes by the late steps of the pathway. Erg27 is a catalytic component of the C-4 demethylation complex that catalyze the reduction of the keto group on the C-3. The third module or late pathway involves the ergosterol synthesis itself through consecutive reactions that mainly occur in the endoplasmic reticulum (ER) membrane. Firstly, the squalene synthase erg9 catalyzes the condensation of 2 farnesyl pyrophosphate moieties to form squalene, which is the precursor of all steroids. Secondly, squalene is converted into lanosterol by the consecutive action of the squalene epoxidase erg1 and the lanosterol synthase erg7. The lanosterol 14-alpha-demethylase erg11/cyp1 catalyzes C14-demethylation of lanosterol to produce 4,4'-dimethyl cholesta-8,14,24-triene-3-beta-ol. In the next steps, a complex process involving various demethylation, reduction and desaturation reactions catalyzed by the C-14 reductase erg24 and the C-4 demethylation complex erg25-erg26-erg27 leads to the production of zymosterol. Erg28 likely functions in the C-4 demethylation complex reaction by tethering erg26 and Erg27 to the endoplasmic reticulum or to facilitate interaction between these proteins. Then, the sterol 24-C-methyltransferase erg6 catalyzes the methyl transfer from S-adenosyl-methionine to the C-24 of zymosterol to form fecosterol. The C-8 sterol isomerase erg2 catalyzes the reaction which results in unsaturation at C-7 in the B ring of sterols and thus converts fecosterol to episterol. The sterol-C5-desaturases erg31 and erg32 then catalyze the introduction of a C-5 double bond in the B ring to produce 5-dehydroepisterol. The C-22 sterol desaturase erg5 further converts 5-dehydroepisterol into ergosta-5,7,22,24(28)-tetraen-3beta-ol by forming the C-22(23) double bond in the sterol side chain. Finally, ergosta-5,7,22,24(28)-tetraen-3beta-ol is substrate of the C-24(28) sterol reductase erg4 to produce ergosterol. In the genus Schizosaccharomyces, a second route exists between lanosterol and fecosterol, via the methylation of lanosterol to eburicol by erg6, followed by C14-demethylation by erg11/cyp1 and C4-demethylation by the demethylation complex erg25-erg26-erg27. The polypeptide is 3-keto-steroid reductase erg27 (Schizosaccharomyces pombe (strain 972 / ATCC 24843) (Fission yeast)).